A 736-amino-acid polypeptide reads, in one-letter code: Oligopeptide transporter 6 (736 aa).

The next 15 membrane-spanning stretches (helical) occupy residues 43-63 (MWVLGIGACIVLSFINQFFWY), 66-86 (MPLSITGISAQIAVVPLGHLM), 116-136 (VLITIFANSGAGSVYATHILS), 148-168 (FLPAFLVMITTQILGFGWAGL), 210-230 (FFLIVLVASFAYYIFPGYLFT), 258-278 (LGIGSIGFDWVTISAYLGSPL), 288-308 (VAIGFVLVMYIVTPVCYWLNI), 357-377 (FFAVTYGLGFATLSATIVHVL), 412-432 (VPLWWFLVILLLNIALIMFIS), 443-463 (WWGVLLACAIAISFTPLIGVI), 489-511 (PVANMCFKVYGYISMTQALTFIS), 527-547 (FMAQVAGTLVAVVVYTGTAWW), 602-622 (WFFLVGAIAPLLVWLATKMFP), 645-665 (ATAVNFTSWLIVAFIFGHFIF), and 678-698 (VLSGGLDAGSAFMTILLFLAL).

Belongs to the oligopeptide OPT transporter (TC 2.A.67.1) family. As to expression, expressed in flowers and roots, and at a low level in leaves and stems. Detected in the cambial zone of the vascular bundles and in the region of lateral root initiation. Low expression in the vascular network of the petals and high in the stamen filaments and the gynoecium.

It localises to the membrane. Its function is as follows. Involved in the translocation of tetra- and pentapeptides across the cellular membrane in an energy-dependent manner. Also involved in transport of glutathione derivatives and metal complexes, and may be involved in stress resistance. The protein is Oligopeptide transporter 6 (OPT6) of Arabidopsis thaliana (Mouse-ear cress).